We begin with the raw amino-acid sequence, 329 residues long: NADH-quinone oxidoreductase subunit H 1 (329 aa).

Transmembrane regions (helical) follow at residues 12–32 (LAKI…LVFA), 78–98 (WLFY…FAVI), 120–140 (VGLL…ALGG), 159–179 (LISY…LAGS), 191–211 (GIWF…SIAA), 242–262 (LFFV…TTFF), 270–290 (WLPP…FFIW), and 308–328 (WKVL…ILML).

It belongs to the complex I subunit 1 family. NDH-1 is composed of 14 different subunits. Subunits NuoA, H, J, K, L, M, N constitute the membrane sector of the complex.

Its subcellular location is the cell inner membrane. The catalysed reaction is a quinone + NADH + 5 H(+)(in) = a quinol + NAD(+) + 4 H(+)(out). In terms of biological role, NDH-1 shuttles electrons from NADH, via FMN and iron-sulfur (Fe-S) centers, to quinones in the respiratory chain. The immediate electron acceptor for the enzyme in this species is believed to be ubiquinone. Couples the redox reaction to proton translocation (for every two electrons transferred, four hydrogen ions are translocated across the cytoplasmic membrane), and thus conserves the redox energy in a proton gradient. This subunit may bind ubiquinone. This Geobacter metallireducens (strain ATCC 53774 / DSM 7210 / GS-15) protein is NADH-quinone oxidoreductase subunit H 1.